The sequence spans 385 residues: MPETEEISKGLEDVNIKWTRLTTIDGNKGILRYGGYSVEDIIASGAQDEEIQYLFLYGNLPTEQELRKYKETVQKGYKIPDFVINAIRQLPRESDAVAMQMAAVAAMAASETKFKWNKDTDRDVAAEMIGRMSAITVNVYRHIMNMPAELPKPSDSYAESFLNAAFGRKATKEEIDAMNTALILYTDHEVPASTTAGLVAVSTLSDMYSGITAALAALKGPLHGGAAEAAIAQFDEIKDPAMVEKWFNDNIINGKKRLMGFGHRVYKTYDPRAKIFKGIAEKLSSKKPEVHKVYEIATKLEDFGIKAFGSKGIYPNTDYFSGIVYMSIGFPLRNNIYTALFALSRVTGWQAHFIEYVEEQQRLIRPRAVYVGPAERKYVPIAERK.

Catalysis depends on residues histidine 223, histidine 263, and aspartate 318.

This sequence belongs to the citrate synthase family. As to quaternary structure, homodimer.

The enzyme catalyses oxaloacetate + acetyl-CoA + H2O = citrate + CoA + H(+). The protein operates within carbohydrate metabolism; tricarboxylic acid cycle; isocitrate from oxaloacetate: step 1/2. Its activity is regulated as follows. Allosterically inhibited by NADH. The sequence is that of Citrate synthase (gltA) from Thermoplasma acidophilum (strain ATCC 25905 / DSM 1728 / JCM 9062 / NBRC 15155 / AMRC-C165).